A 361-amino-acid polypeptide reads, in one-letter code: DNA replication and repair protein RecF (361 aa).

30-37 (GANGSGKT) contributes to the ATP binding site.

This sequence belongs to the RecF family.

The protein resides in the cytoplasm. The RecF protein is involved in DNA metabolism; it is required for DNA replication and normal SOS inducibility. RecF binds preferentially to single-stranded, linear DNA. It also seems to bind ATP. The chain is DNA replication and repair protein RecF from Chromohalobacter salexigens (strain ATCC BAA-138 / DSM 3043 / CIP 106854 / NCIMB 13768 / 1H11).